Reading from the N-terminus, the 130-residue chain is Small ribosomal subunit protein uS9 (130 aa).

The tract at residues 104–130 (LTRDPRMKERRKYGLKKARKAPQFSKR) is disordered. The segment covering 111 to 130 (KERRKYGLKKARKAPQFSKR) has biased composition (basic residues).

The protein belongs to the universal ribosomal protein uS9 family.

The chain is Small ribosomal subunit protein uS9 from Moorella thermoacetica (strain ATCC 39073 / JCM 9320).